Here is a 1537-residue protein sequence, read N- to C-terminus: DNA-directed RNA polymerase subunit beta' (1537 aa).

Residues cysteine 57, cysteine 59, cysteine 72, and cysteine 75 each coordinate Zn(2+). Mg(2+) is bound by residues aspartate 746, aspartate 748, and aspartate 750. Zn(2+) is bound by residues cysteine 1120, cysteine 1201, cysteine 1208, and cysteine 1211. The disordered stretch occupies residues 1502-1537 (LEKYGQTSVSTDAVTGSQRYDDTRPSSTSINPSYGD). Polar residues-rich tracts occupy residues 1506 to 1519 (GQTS…TGSQ) and 1526 to 1537 (PSSTSINPSYGD).

This sequence belongs to the RNA polymerase beta' chain family. In terms of assembly, the RNAP catalytic core consists of 2 alpha, 1 beta, 1 beta' and 1 omega subunit. When a sigma factor is associated with the core the holoenzyme is formed, which can initiate transcription. Mg(2+) is required as a cofactor. The cofactor is Zn(2+).

The enzyme catalyses RNA(n) + a ribonucleoside 5'-triphosphate = RNA(n+1) + diphosphate. DNA-dependent RNA polymerase catalyzes the transcription of DNA into RNA using the four ribonucleoside triphosphates as substrates. This Deinococcus geothermalis (strain DSM 11300 / CIP 105573 / AG-3a) protein is DNA-directed RNA polymerase subunit beta'.